The primary structure comprises 104 residues: Elicitor peptide 6 (104 aa).

Positions Met1–Arg81 are excised as a propeptide. Residues Ser48–Ser61 show a composition bias toward low complexity. Residues Ser48–Asn104 form a disordered region. Residues Val63 to Glu74 are compositionally biased toward acidic residues.

Belongs to the brassicaceae elicitor peptide family.

In terms of biological role, elicitor of plant defense. The polypeptide is Elicitor peptide 6 (PEP6) (Arabidopsis thaliana (Mouse-ear cress)).